An 89-amino-acid polypeptide reads, in one-letter code: Small ribosomal subunit protein uS15 (89 aa).

It belongs to the universal ribosomal protein uS15 family. As to quaternary structure, part of the 30S ribosomal subunit. Forms a bridge to the 50S subunit in the 70S ribosome, contacting the 23S rRNA.

One of the primary rRNA binding proteins, it binds directly to 16S rRNA where it helps nucleate assembly of the platform of the 30S subunit by binding and bridging several RNA helices of the 16S rRNA. Functionally, forms an intersubunit bridge (bridge B4) with the 23S rRNA of the 50S subunit in the ribosome. This is Small ribosomal subunit protein uS15 from Prosthecochloris aestuarii (strain DSM 271 / SK 413).